The chain runs to 671 residues: MHLPNVLQARFVQALEPLTDSPSDYAGMIRPAADPKFGDYQSNAAMPLAKRVGKTSRDVAAELVQNLNVTDLFEEPEVAGPGFINLRLKDSVLFDSIQQMLLDERVGVSKTTDPKKVIVDFSSPNVAKPMHVGHIRSTVIGDCLARTLRFYGEDVVTDNHLGDWGTQFGIIIYGYRNFGDPAKVAANPVPELSALYRLTNQLIEYQKAKQSLATMADKLATAKSDAKTAKEVSDQSESDENLKPKDKKKLRKNAEAATRRVASIEADMKSLKAKIDAVDSDTELSKLASEHSDVDVAVLRETAKLHEGDPENLALWKEFLPHCQDEINRIYDRLNVQFDHTLGESFYHDRLAGVVDHLTTLGLTTKSDGAICVFLEGFDSPMIIQKRDGAFLYATTDLATLQYRRDEFQPDEILYVVDSRQGEHFKKFFAMAEPLGMAEVQLVHVNFGTVLGPDGRPMKTRSGSLIGLESLLNDAVSRAKEVVCNPDRLATMDPPMGGEEQQQIAEIVGIGAIKYADLSHHRTSDYKFDVDKMVALEGNTATYVQYSYARTQSILRRASDGEGLPAFEQAIEQAAATQPMTFTHPNERSLALMLMRFEEAIEQVRLNYAPNALCDYLFETAKTYSSFNESCRVLGNDDPAVMQTRLALVVLTGRVLKKGLSLLGIDVAERM.

Residues 124–134 carry the 'HIGH' region motif; sequence PNVAKPMHVGH. Residues 223–254 are disordered; the sequence is KSDAKTAKEVSDQSESDENLKPKDKKKLRKNA. The span at 224 to 233 shows a compositional bias: basic and acidic residues; that stretch reads SDAKTAKEVS.

Belongs to the class-I aminoacyl-tRNA synthetase family. As to quaternary structure, monomer.

Its subcellular location is the cytoplasm. The catalysed reaction is tRNA(Arg) + L-arginine + ATP = L-arginyl-tRNA(Arg) + AMP + diphosphate. The protein is Arginine--tRNA ligase of Rhodopirellula baltica (strain DSM 10527 / NCIMB 13988 / SH1).